A 439-amino-acid chain; its full sequence is Large ribosomal subunit protein mL65 (439 aa).

It belongs to the mitochondrion-specific ribosomal protein mL65 family. Component of the mitochondrial large ribosomal subunit (mt-LSU). Mature mammalian 55S mitochondrial ribosomes consist of a small (28S) and a large (39S) subunit. The 28S small subunit contains a 12S ribosomal RNA (12S mt-rRNA) and 30 different proteins. The 39S large subunit contains a 16S rRNA (16S mt-rRNA), a copy of mitochondrial valine transfer RNA (mt-tRNA(Val)), which plays an integral structural role, and 52 different proteins. mL65 forms a heterodimer with mL37. In terms of tissue distribution, heart, skeletal muscle, kidney and liver. Lower expression in placenta and peripheral blood leukocytes.

Its subcellular location is the mitochondrion. The protein is Large ribosomal subunit protein mL65 (MRPS30) of Homo sapiens (Human).